We begin with the raw amino-acid sequence, 556 residues long: ATP synthase subunit alpha 2 (556 aa).

An ATP-binding site is contributed by 177-184; sequence GDRATGKT. The segment at 514 to 556 is disordered; that stretch reads GGHAEDAADDMGGALDGEHASGDATSIAPTPPGGAEAGAPRKR. A compositionally biased stretch (low complexity) spans 546-556; the sequence is GGAEAGAPRKR.

Belongs to the ATPase alpha/beta chains family. F-type ATPases have 2 components, CF(1) - the catalytic core - and CF(0) - the membrane proton channel. CF(1) has five subunits: alpha(3), beta(3), gamma(1), delta(1), epsilon(1). CF(0) has three main subunits: a(1), b(2) and c(9-12). The alpha and beta chains form an alternating ring which encloses part of the gamma chain. CF(1) is attached to CF(0) by a central stalk formed by the gamma and epsilon chains, while a peripheral stalk is formed by the delta and b chains.

The protein resides in the cell inner membrane. The catalysed reaction is ATP + H2O + 4 H(+)(in) = ADP + phosphate + 5 H(+)(out). Its function is as follows. Produces ATP from ADP in the presence of a proton gradient across the membrane. The alpha chain is a regulatory subunit. The protein is ATP synthase subunit alpha 2 of Burkholderia thailandensis (strain ATCC 700388 / DSM 13276 / CCUG 48851 / CIP 106301 / E264).